We begin with the raw amino-acid sequence, 130 residues long: UPF0251 protein MmarC6_0272 (130 aa).

This sequence belongs to the UPF0251 family.

The sequence is that of UPF0251 protein MmarC6_0272 from Methanococcus maripaludis (strain C6 / ATCC BAA-1332).